Here is a 537-residue protein sequence, read N- to C-terminus: Protoporphyrinogen oxidase 1, chloroplastic (537 aa).

A chloroplast-targeting transit peptide spans 1–34; that stretch reads MELSLLRPTTQSLLPSFSKPNLRLNVYKPLRLRC. Ser-35 is subject to N-acetylserine. FAD is bound by residues 63–68, 90–91, and 112–115; these read GGGISG, EA, and GPNS. Residues 256-268 show a composition bias toward basic and acidic residues; that stretch reads RKNAPKAERDPRL. Residues 256–275 form a disordered region; sequence RKNAPKAERDPRLPKPQGQT. 511-513 contacts FAD; it reads VAL.

It belongs to the protoporphyrinogen/coproporphyrinogen oxidase family. Protoporphyrinogen oxidase subfamily. It depends on FAD as a cofactor. In terms of tissue distribution, expressed at high levels in the leaves and at low levels in the roots and floral buds.

The protein localises to the plastid. The protein resides in the chloroplast. The enzyme catalyses protoporphyrinogen IX + 3 O2 = protoporphyrin IX + 3 H2O2. The protein operates within porphyrin-containing compound metabolism; protoporphyrin-IX biosynthesis; protoporphyrin-IX from protoporphyrinogen-IX: step 1/1. Its pathway is porphyrin-containing compound metabolism; chlorophyll biosynthesis. With respect to regulation, inhibited by acifluorfen. Its function is as follows. Catalyzes the 6-electron oxidation of protoporphyrinogen-IX to form protoporphyrin-IX. This chain is Protoporphyrinogen oxidase 1, chloroplastic (PPOX1), found in Arabidopsis thaliana (Mouse-ear cress).